The following is a 261-amino-acid chain: MTHQTHAYHMVNPSPWPLTGALSALLMTSGLIMWFHFNSTTLLTLGLTTNMLTMYQWWRDVIRESTFQGHHTPTVQKGLRYGMILFIISEVLFFTGFFWAFYHSSLAPTPELGGCWPPTGIHPLNPLEVPLLNTSVLLASGVSITWAHHSLMEGNRNPMLQALFITIALGIYFTLLQASEYYEAPFTISDGVYGSTFFVATGFHGLHVIIGSTFLIVCFFRQLKFHFTSNHHFGFEAAAWYWHFVDVVWLFLYVSIYWWGS.

Residues 1-15 (MTHQTHAYHMVNPSP) lie on the Mitochondrial matrix side of the membrane. The chain crosses the membrane as a helical span at residues 16–34 (WPLTGALSALLMTSGLIMW). Residues 35-40 (FHFNST) lie on the Mitochondrial intermembrane side of the membrane. Residues 41 to 66 (TLLTLGLTTNMLTMYQWWRDVIREST) form a helical membrane-spanning segment. Residues 67–72 (FQGHHT) lie on the Mitochondrial matrix side of the membrane. Residues 73 to 105 (PTVQKGLRYGMILFIISEVLFFTGFFWAFYHSS) form a helical membrane-spanning segment. Over 106–128 (LAPTPELGGCWPPTGIHPLNPLE) the chain is Mitochondrial intermembrane. Residues 129–152 (VPLLNTSVLLASGVSITWAHHSLM) form a helical membrane-spanning segment. Residues 153-155 (EGN) are Mitochondrial matrix-facing. The helical transmembrane segment at 156–183 (RNPMLQALFITIALGIYFTLLQASEYYE) threads the bilayer. Topologically, residues 184–190 (APFTISD) are mitochondrial intermembrane. A helical transmembrane segment spans residues 191–223 (GVYGSTFFVATGFHGLHVIIGSTFLIVCFFRQL). At 224–232 (KFHFTSNHH) the chain is on the mitochondrial matrix side. A helical membrane pass occupies residues 233-256 (FGFEAAAWYWHFVDVVWLFLYVSI). Topologically, residues 257 to 261 (YWWGS) are mitochondrial intermembrane.

It belongs to the cytochrome c oxidase subunit 3 family. In terms of assembly, component of the cytochrome c oxidase (complex IV, CIV), a multisubunit enzyme composed of 14 subunits. The complex is composed of a catalytic core of 3 subunits MT-CO1, MT-CO2 and MT-CO3, encoded in the mitochondrial DNA, and 11 supernumerary subunits COX4I, COX5A, COX5B, COX6A, COX6B, COX6C, COX7A, COX7B, COX7C, COX8 and NDUFA4, which are encoded in the nuclear genome. The complex exists as a monomer or a dimer and forms supercomplexes (SCs) in the inner mitochondrial membrane with NADH-ubiquinone oxidoreductase (complex I, CI) and ubiquinol-cytochrome c oxidoreductase (cytochrome b-c1 complex, complex III, CIII), resulting in different assemblies (supercomplex SCI(1)III(2)IV(1) and megacomplex MCI(2)III(2)IV(2)).

The protein resides in the mitochondrion inner membrane. It carries out the reaction 4 Fe(II)-[cytochrome c] + O2 + 8 H(+)(in) = 4 Fe(III)-[cytochrome c] + 2 H2O + 4 H(+)(out). In terms of biological role, component of the cytochrome c oxidase, the last enzyme in the mitochondrial electron transport chain which drives oxidative phosphorylation. The respiratory chain contains 3 multisubunit complexes succinate dehydrogenase (complex II, CII), ubiquinol-cytochrome c oxidoreductase (cytochrome b-c1 complex, complex III, CIII) and cytochrome c oxidase (complex IV, CIV), that cooperate to transfer electrons derived from NADH and succinate to molecular oxygen, creating an electrochemical gradient over the inner membrane that drives transmembrane transport and the ATP synthase. Cytochrome c oxidase is the component of the respiratory chain that catalyzes the reduction of oxygen to water. Electrons originating from reduced cytochrome c in the intermembrane space (IMS) are transferred via the dinuclear copper A center (CU(A)) of subunit 2 and heme A of subunit 1 to the active site in subunit 1, a binuclear center (BNC) formed by heme A3 and copper B (CU(B)). The BNC reduces molecular oxygen to 2 water molecules using 4 electrons from cytochrome c in the IMS and 4 protons from the mitochondrial matrix. This Madoqua guentheri (Guenther's dik-dik) protein is Cytochrome c oxidase subunit 3 (MT-CO3).